A 75-amino-acid polypeptide reads, in one-letter code: SPbeta prophage-derived uncharacterized protein YorX (75 aa).

This is SPbeta prophage-derived uncharacterized protein YorX (yorX) from Bacillus subtilis (strain 168).